Here is a 224-residue protein sequence, read N- to C-terminus: Cytidylate kinase (224 aa).

An ATP-binding site is contributed by 13-21 (GPSASGKGT).

This sequence belongs to the cytidylate kinase family. Type 1 subfamily.

The protein resides in the cytoplasm. The enzyme catalyses CMP + ATP = CDP + ADP. It carries out the reaction dCMP + ATP = dCDP + ADP. This Nitrosomonas eutropha (strain DSM 101675 / C91 / Nm57) protein is Cytidylate kinase.